A 22-amino-acid polypeptide reads, in one-letter code: Sex pheromone inhibitor determinant (22 aa).

The propeptide occupies 1 to 14 (MSKRAMKKIIPLIT).

Its subcellular location is the secreted. Functionally, acts as a competitive inhibitor of the CAD1 pheromone. This is Sex pheromone inhibitor determinant (iad) from Enterococcus faecalis (strain ATCC 700802 / V583).